A 233-amino-acid chain; its full sequence is MPARRRWFENRPVLKRIVLAVLALVVLPYVLIFFYLLPFIHPVSTLMLRDLVLLRGYDRRWVSLDEISPVLVQSVMMSEDGQYCFHGGVDWAEMRMLVEDTLKGQATRGGSTIPMQTAKNLFLWNSRSFVRKAMELPLAVSTDFVLSKRRLMEIYLNIAEWGPGIYGIEAAAQHHFKVPASKLTRRQASLLAVSLPNPIDRKAGKPGRGLRRLAGVIERRAQGSGEYIKCIYE.

The helical transmembrane segment at 17 to 37 (IVLAVLALVVLPYVLIFFYLL) threads the bilayer.

Belongs to the glycosyltransferase 51 family.

It localises to the cell inner membrane. The catalysed reaction is [GlcNAc-(1-&gt;4)-Mur2Ac(oyl-L-Ala-gamma-D-Glu-L-Lys-D-Ala-D-Ala)](n)-di-trans,octa-cis-undecaprenyl diphosphate + beta-D-GlcNAc-(1-&gt;4)-Mur2Ac(oyl-L-Ala-gamma-D-Glu-L-Lys-D-Ala-D-Ala)-di-trans,octa-cis-undecaprenyl diphosphate = [GlcNAc-(1-&gt;4)-Mur2Ac(oyl-L-Ala-gamma-D-Glu-L-Lys-D-Ala-D-Ala)](n+1)-di-trans,octa-cis-undecaprenyl diphosphate + di-trans,octa-cis-undecaprenyl diphosphate + H(+). Its pathway is cell wall biogenesis; peptidoglycan biosynthesis. In terms of biological role, peptidoglycan polymerase that catalyzes glycan chain elongation from lipid-linked precursors. The sequence is that of Biosynthetic peptidoglycan transglycosylase from Rhizobium etli (strain ATCC 51251 / DSM 11541 / JCM 21823 / NBRC 15573 / CFN 42).